Reading from the N-terminus, the 247-residue chain is Triosephosphate isomerase (247 aa).

Asn10 and Lys12 together coordinate substrate. The active-site Electrophile is the His95. The active-site Proton acceptor is the Glu165.

The protein belongs to the triosephosphate isomerase family. As to quaternary structure, homodimer.

The enzyme catalyses D-glyceraldehyde 3-phosphate = dihydroxyacetone phosphate. Its pathway is carbohydrate biosynthesis; gluconeogenesis. It functions in the pathway carbohydrate degradation; glycolysis; D-glyceraldehyde 3-phosphate from glycerone phosphate: step 1/1. The chain is Triosephosphate isomerase (TPI1) from Yarrowia lipolytica (strain CLIB 122 / E 150) (Yeast).